The following is a 459-amino-acid chain: Cysteine--tRNA ligase (459 aa).

A Zn(2+)-binding site is contributed by cysteine 28. The short motif at 30-40 (ITVYDLCHVGH) is the 'HIGH' region element. Residues cysteine 209, histidine 234, and glutamate 238 each coordinate Zn(2+). The 'KMSKS' region motif lies at 266 to 270 (KMSKS). Lysine 269 lines the ATP pocket.

It belongs to the class-I aminoacyl-tRNA synthetase family. In terms of assembly, monomer. Requires Zn(2+) as cofactor.

Its subcellular location is the cytoplasm. It carries out the reaction tRNA(Cys) + L-cysteine + ATP = L-cysteinyl-tRNA(Cys) + AMP + diphosphate. This Pasteurella multocida (strain Pm70) protein is Cysteine--tRNA ligase (cysS).